A 336-amino-acid chain; its full sequence is Cytosolic 5'-nucleotidase 3A (336 aa).

Asp-88 serves as the catalytic Nucleophile. Mg(2+)-binding residues include Asp-88 and Asp-90. Residue Asp-90 is the Proton donor of the active site. Glu-135 is a CMP binding site. N(7)-methyl-GMP-binding residues include Glu-135 and Ser-156. Substrate-binding positions include Ser-203–Ala-204 and Lys-252. Residue Asp-277 participates in Mg(2+) binding. At Ser-278 the chain carries Phosphoserine.

The protein belongs to the pyrimidine 5'-nucleotidase family. As to quaternary structure, monomer. In terms of tissue distribution, isoforms 1, 3 and 4 are expressed in reticulocytes. Isoform 4 is hardly detectable in bone marrow and fetal liver.

The protein localises to the cytoplasm. It is found in the endoplasmic reticulum. It catalyses the reaction N(7)-methyl-GMP + H2O = N(7)-methylguanosine + phosphate. The catalysed reaction is CMP + H2O = cytidine + phosphate. The enzyme catalyses a ribonucleoside 5'-phosphate + H2O = a ribonucleoside + phosphate. Functionally, nucleotidase which shows specific activity towards cytidine monophosphate (CMP) and 7-methylguanosine monophosphate (m(7)GMP). CMP seems to be the preferred substrate. The sequence is that of Cytosolic 5'-nucleotidase 3A (NT5C3A) from Homo sapiens (Human).